Consider the following 734-residue polypeptide: Photosystem I P700 chlorophyll a apoprotein A2 (734 aa).

8 helical membrane passes run 46–69, 135–158, 175–199, 273–291, 330–353, 369–395, 417–439, and 517–535; these read IFAS…FHVA, LYTG…LHLQ, LNHH…HVAI, IAHH…GHMY, LHFQ…QHMY, AALY…IFFI, AIIS…LYVH, and FLVH…LILV. [4Fe-4S] cluster contacts are provided by Cys-559 and Cys-568. A run of 2 helical transmembrane segments spans residues 575–596 and 643–665; these read AFYL…YWHW and LSVW…MFLI. His-654, Met-662, and Tyr-670 together coordinate chlorophyll a. Trp-671 lines the phylloquinone pocket. A helical transmembrane segment spans residues 707 to 727; the sequence is LVGLAHFSVGYIFTYAAFLIA.

This sequence belongs to the PsaA/PsaB family. In terms of assembly, the PsaA/B heterodimer binds the P700 chlorophyll special pair and subsequent electron acceptors. PSI consists of a core antenna complex that captures photons, and an electron transfer chain that converts photonic excitation into a charge separation. The eukaryotic PSI reaction center is composed of at least 11 subunits. Requires P700 is a chlorophyll a/chlorophyll a' dimer, A0 is one or more chlorophyll a, A1 is one or both phylloquinones and FX is a shared 4Fe-4S iron-sulfur center. as cofactor.

The protein resides in the plastid. It localises to the chloroplast thylakoid membrane. The catalysed reaction is reduced [plastocyanin] + hnu + oxidized [2Fe-2S]-[ferredoxin] = oxidized [plastocyanin] + reduced [2Fe-2S]-[ferredoxin]. PsaA and PsaB bind P700, the primary electron donor of photosystem I (PSI), as well as the electron acceptors A0, A1 and FX. PSI is a plastocyanin-ferredoxin oxidoreductase, converting photonic excitation into a charge separation, which transfers an electron from the donor P700 chlorophyll pair to the spectroscopically characterized acceptors A0, A1, FX, FA and FB in turn. Oxidized P700 is reduced on the lumenal side of the thylakoid membrane by plastocyanin. This Citrus sinensis (Sweet orange) protein is Photosystem I P700 chlorophyll a apoprotein A2.